The primary structure comprises 119 residues: Large ribosomal subunit protein bL19 (119 aa).

The protein belongs to the bacterial ribosomal protein bL19 family.

This protein is located at the 30S-50S ribosomal subunit interface and may play a role in the structure and function of the aminoacyl-tRNA binding site. The polypeptide is Large ribosomal subunit protein bL19 (Photobacterium profundum (strain SS9)).